A 231-amino-acid chain; its full sequence is Small ribosomal subunit protein uS5 (231 aa).

The disordered stretch occupies residues 1–63; it reads MADLENKTVK…KSVDRANKVK (63 aa). Positions 29–60 are enriched in basic and acidic residues; it reads KRTESGAKKQIWEKRSAHDSKDMPKKSVDRAN. The S5 DRBM domain maps to 75–138; the sequence is FSEKVVNISR…KDARNHLISV (64 aa).

It belongs to the universal ribosomal protein uS5 family. In terms of assembly, part of the 30S ribosomal subunit. Contacts proteins S4 and S8.

In terms of biological role, with S4 and S12 plays an important role in translational accuracy. Its function is as follows. Located at the back of the 30S subunit body where it stabilizes the conformation of the head with respect to the body. This is Small ribosomal subunit protein uS5 from Mycoplasmopsis agalactiae (strain NCTC 10123 / CIP 59.7 / PG2) (Mycoplasma agalactiae).